The chain runs to 492 residues: Lysine--tRNA ligase (492 aa).

Aspartate 395 and glutamate 402 together coordinate Mg(2+).

It belongs to the class-II aminoacyl-tRNA synthetase family. Homodimer. Mg(2+) serves as cofactor.

It localises to the cytoplasm. The catalysed reaction is tRNA(Lys) + L-lysine + ATP = L-lysyl-tRNA(Lys) + AMP + diphosphate. This is Lysine--tRNA ligase from Thermus thermophilus (strain ATCC BAA-163 / DSM 7039 / HB27).